The sequence spans 512 residues: MKLKPIEVADILQKEIANINCLSELEEVGQVINVGDGIAKIYGLANVQSGEVVEFESGVKGLVLNLENDSVDAVIMGDDNQVQQGDKVKRTKEVLEVLVGTALLGRVVDALGNPIDGKGDIKSKEYRHIEMKAPGIIDRASVSEPVQTGIKVIDLLIPIGRGQRELIIGDRQTGKTAIAIDTIINQKKAHSLNDEKDKIYCIYVAIGQKRSSVAQIVKKLEDAGAMDYTIIVSATASEAAALQFVAPYAACSMGEYFRDNGKHALIIYDDLSKHAVAYRQISLLLRRPPGREAYPGDVFYLHSRLLECAAKMSEEKGGGSLTALPIIETQAGDVSAYIPTNVISITDGQIFLESELFYKGIRPAVNVGISVSRVGSAAQIKAMKQVAGSIKLELAQFRELESFLQFGSDLDSATKAQIEHGKRLVEILKQAQYHPFSVEEQIISIYAGTKKYLINIPVERIKEFEEKMLSEIKQNQKDILESIKSEKRITEENEQKLKTFLENFVKDFVKID.

169-176 serves as a coordination point for ATP; it reads GDRQTGKT.

This sequence belongs to the ATPase alpha/beta chains family. F-type ATPases have 2 components, CF(1) - the catalytic core - and CF(0) - the membrane proton channel. CF(1) has five subunits: alpha(3), beta(3), gamma(1), delta(1), epsilon(1). CF(0) has three main subunits: a(1), b(2) and c(9-12). The alpha and beta chains form an alternating ring which encloses part of the gamma chain. CF(1) is attached to CF(0) by a central stalk formed by the gamma and epsilon chains, while a peripheral stalk is formed by the delta and b chains.

The protein localises to the cell inner membrane. The enzyme catalyses ATP + H2O + 4 H(+)(in) = ADP + phosphate + 5 H(+)(out). Functionally, produces ATP from ADP in the presence of a proton gradient across the membrane. The alpha chain is a regulatory subunit. In Rickettsia bellii (strain OSU 85-389), this protein is ATP synthase subunit alpha.